A 166-amino-acid polypeptide reads, in one-letter code: Regulatory protein RecX (166 aa).

The protein belongs to the RecX family.

The protein resides in the cytoplasm. Modulates RecA activity. This chain is Regulatory protein RecX, found in Escherichia coli O139:H28 (strain E24377A / ETEC).